We begin with the raw amino-acid sequence, 323 residues long: tRNA dimethylallyltransferase (323 aa).

An ATP-binding site is contributed by 12–19; the sequence is GPTAAGKT. 14–19 contacts substrate; sequence TAAGKT. Interaction with substrate tRNA stretches follow at residues 37–40 and 161–165; these read DSAL and QRLSR.

Belongs to the IPP transferase family. Monomer. Mg(2+) serves as cofactor.

It catalyses the reaction adenosine(37) in tRNA + dimethylallyl diphosphate = N(6)-dimethylallyladenosine(37) in tRNA + diphosphate. In terms of biological role, catalyzes the transfer of a dimethylallyl group onto the adenine at position 37 in tRNAs that read codons beginning with uridine, leading to the formation of N6-(dimethylallyl)adenosine (i(6)A). The chain is tRNA dimethylallyltransferase from Pseudomonas fluorescens (strain SBW25).